A 404-amino-acid polypeptide reads, in one-letter code: uncharacterized protein (404 aa).

The span at valine 262–alanine 278 shows a compositional bias: polar residues. Disordered stretches follow at residues valine 262–leucine 307 and methionine 319–aspartate 340. 3 positions are modified to phosphoserine: serine 268, serine 276, and serine 279. Threonine 290 and threonine 293 each carry phosphothreonine. 5 positions are modified to phosphoserine: serine 304, serine 306, serine 324, serine 358, and serine 362. The span at methionine 319–aspartate 336 shows a compositional bias: basic and acidic residues.

This is an uncharacterized protein from Mus musculus (Mouse).